Consider the following 355-residue polypeptide: Peptide chain release factor 1 (355 aa).

An N5-methylglutamine modification is found at Q233.

The protein belongs to the prokaryotic/mitochondrial release factor family. Methylated by PrmC. Methylation increases the termination efficiency of RF1.

The protein localises to the cytoplasm. Peptide chain release factor 1 directs the termination of translation in response to the peptide chain termination codons UAG and UAA. This Bacillus mycoides (strain KBAB4) (Bacillus weihenstephanensis) protein is Peptide chain release factor 1.